Consider the following 71-residue polypeptide: Translation initiation factor IF-1 (71 aa).

In terms of domain architecture, S1-like spans 1-71; sequence MSKDDLIQFT…LTKGRVIHRH (71 aa).

This sequence belongs to the IF-1 family. In terms of assembly, component of the 30S ribosomal translation pre-initiation complex which assembles on the 30S ribosome in the order IF-2 and IF-3, IF-1 and N-formylmethionyl-tRNA(fMet); mRNA recruitment can occur at any time during PIC assembly.

It is found in the cytoplasm. One of the essential components for the initiation of protein synthesis. Stabilizes the binding of IF-2 and IF-3 on the 30S subunit to which N-formylmethionyl-tRNA(fMet) subsequently binds. Helps modulate mRNA selection, yielding the 30S pre-initiation complex (PIC). Upon addition of the 50S ribosomal subunit IF-1, IF-2 and IF-3 are released leaving the mature 70S translation initiation complex. This chain is Translation initiation factor IF-1, found in Rickettsia felis (strain ATCC VR-1525 / URRWXCal2) (Rickettsia azadi).